Consider the following 320-residue polypeptide: Beta-carotene ketolase (320 aa).

It carries out the reaction all-trans-beta-carotene + 2 AH2 + 2 O2 = echinenone + 2 A + 3 H2O. It catalyses the reaction echinenone + 2 AH2 + 2 O2 = canthaxanthin + 2 A + 3 H2O. It participates in carotenoid biosynthesis; astaxanthin biosynthesis. In terms of biological role, converts beta-carotene to canthaxanthin via echinenone. In Haematococcus lacustris (Green alga), this protein is Beta-carotene ketolase.